A 249-amino-acid chain; its full sequence is 2-C-methyl-D-erythritol 4-phosphate cytidylyltransferase (249 aa).

This sequence belongs to the IspD/TarI cytidylyltransferase family. IspD subfamily.

The catalysed reaction is 2-C-methyl-D-erythritol 4-phosphate + CTP + H(+) = 4-CDP-2-C-methyl-D-erythritol + diphosphate. It participates in isoprenoid biosynthesis; isopentenyl diphosphate biosynthesis via DXP pathway; isopentenyl diphosphate from 1-deoxy-D-xylulose 5-phosphate: step 2/6. Catalyzes the formation of 4-diphosphocytidyl-2-C-methyl-D-erythritol from CTP and 2-C-methyl-D-erythritol 4-phosphate (MEP). This is 2-C-methyl-D-erythritol 4-phosphate cytidylyltransferase from Shewanella oneidensis (strain ATCC 700550 / JCM 31522 / CIP 106686 / LMG 19005 / NCIMB 14063 / MR-1).